Consider the following 175-residue polypeptide: NADH dehydrogenase [ubiquinone] 1 alpha subcomplex assembly factor 4 (175 aa).

Glycine 2 is lipidated: N-myristoyl glycine. The residue at position 35 (serine 35) is a Phosphoserine.

Belongs to the NDUFAF4 family. Binds calmodulin. Interacts with NDUFAF3. In terms of assembly, (Microbial infection) Interacts with the vesicular stomatitis virus matrix protein/M; the interaction inhibits viral propagation. In terms of processing, phosphorylated on serine. Prolactin stimulate serine phosphorylation.

Its subcellular location is the mitochondrion. The protein localises to the membrane. Involved in the assembly of mitochondrial NADH:ubiquinone oxidoreductase complex (complex I). May be involved in cell proliferation and survival of hormone-dependent tumor cells. May be a regulator of breast tumor cell invasion. This is NADH dehydrogenase [ubiquinone] 1 alpha subcomplex assembly factor 4 from Homo sapiens (Human).